The primary structure comprises 302 residues: Riboflavin transporter (302 aa).

8 helical membrane passes run alanine 16 to valine 36, leucine 44 to leucine 64, valine 87 to tryptophan 107, alanine 109 to glycine 129, isoleucine 158 to isoleucine 178, isoleucine 191 to alanine 213, glycine 227 to alanine 247, and glycine 264 to leucine 284. 2 EamA domains span residues phenylalanine 30 to leucine 151 and leucine 170 to methionine 291.

The protein belongs to the drug/metabolite transporter (DMT) superfamily. 10 TMS drug/metabolite exporter (DME) (TC 2.A.7.3) family.

Its subcellular location is the cell membrane. Its function is as follows. Transports riboflavin into the cell. Can also transport FMN and FAD. Required for normal nodule development during colonization of pea plant roots. This Rhizobium johnstonii (strain DSM 114642 / LMG 32736 / 3841) (Rhizobium leguminosarum bv. viciae) protein is Riboflavin transporter.